The primary structure comprises 517 residues: GMP synthase [glutamine-hydrolyzing] (517 aa).

A Glutamine amidotransferase type-1 domain is found at 9–199; the sequence is RILILDFGSQ…VLGICGCERL (191 aa). Residue Cys-86 is the Nucleophile of the active site. Residues His-173 and Glu-175 contribute to the active site. Residues 200–392 enclose the GMPS ATP-PPase domain; it reads WTSESIIEDA…LGLPYEMLYR (193 aa). 227 to 233 contacts ATP; sequence SGGVDSS.

Homodimer.

The catalysed reaction is XMP + L-glutamine + ATP + H2O = GMP + L-glutamate + AMP + diphosphate + 2 H(+). It participates in purine metabolism; GMP biosynthesis; GMP from XMP (L-Gln route): step 1/1. In terms of biological role, catalyzes the synthesis of GMP from XMP. The polypeptide is GMP synthase [glutamine-hydrolyzing] (Vibrio vulnificus (strain CMCP6)).